Consider the following 185-residue polypeptide: Elongation factor P (185 aa).

The protein belongs to the elongation factor P family.

Its subcellular location is the cytoplasm. The protein operates within protein biosynthesis; polypeptide chain elongation. Its function is as follows. Involved in peptide bond synthesis. Stimulates efficient translation and peptide-bond synthesis on native or reconstituted 70S ribosomes in vitro. Probably functions indirectly by altering the affinity of the ribosome for aminoacyl-tRNA, thus increasing their reactivity as acceptors for peptidyl transferase. This is Elongation factor P from Limosilactobacillus fermentum (strain NBRC 3956 / LMG 18251) (Lactobacillus fermentum).